Reading from the N-terminus, the 422-residue chain is UDP-N-acetylglucosamine 1-carboxyvinyltransferase (422 aa).

22-23 is a binding site for phosphoenolpyruvate; the sequence is KN. Residue R93 coordinates UDP-N-acetyl-alpha-D-glucosamine. The active-site Proton donor is the C117. 2-(S-cysteinyl)pyruvic acid O-phosphothioketal is present on C117. Residues 122-126, D305, and I327 each bind UDP-N-acetyl-alpha-D-glucosamine; that span reads RPVDQ.

This sequence belongs to the EPSP synthase family. MurA subfamily.

Its subcellular location is the cytoplasm. It carries out the reaction phosphoenolpyruvate + UDP-N-acetyl-alpha-D-glucosamine = UDP-N-acetyl-3-O-(1-carboxyvinyl)-alpha-D-glucosamine + phosphate. The protein operates within cell wall biogenesis; peptidoglycan biosynthesis. Functionally, cell wall formation. Adds enolpyruvyl to UDP-N-acetylglucosamine. The chain is UDP-N-acetylglucosamine 1-carboxyvinyltransferase from Bordetella parapertussis (strain 12822 / ATCC BAA-587 / NCTC 13253).